Consider the following 86-residue polypeptide: Large ribosomal subunit protein bL27 (86 aa).

This sequence belongs to the bacterial ribosomal protein bL27 family.

In Xanthomonas axonopodis pv. citri (strain 306), this protein is Large ribosomal subunit protein bL27.